The following is a 504-amino-acid chain: Maturase K (504 aa).

It belongs to the intron maturase 2 family. MatK subfamily.

The protein resides in the plastid. Its subcellular location is the chloroplast. In terms of biological role, usually encoded in the trnK tRNA gene intron. Probably assists in splicing its own and other chloroplast group II introns. This chain is Maturase K, found in Nepenthes distillatoria (Pitcher plant).